A 189-amino-acid chain; its full sequence is 7-methyl-GTP pyrophosphatase (189 aa).

The active-site Proton acceptor is the Asp71.

The protein belongs to the Maf family. YceF subfamily. The cofactor is a divalent metal cation.

The protein localises to the cytoplasm. The enzyme catalyses N(7)-methyl-GTP + H2O = N(7)-methyl-GMP + diphosphate + H(+). In terms of biological role, nucleoside triphosphate pyrophosphatase that hydrolyzes 7-methyl-GTP (m(7)GTP). May have a dual role in cell division arrest and in preventing the incorporation of modified nucleotides into cellular nucleic acids. This Bdellovibrio bacteriovorus (strain ATCC 15356 / DSM 50701 / NCIMB 9529 / HD100) protein is 7-methyl-GTP pyrophosphatase.